Consider the following 109-residue polypeptide: Nucleoid-associated protein SG0690 (109 aa).

A disordered region spans residues 1-23 (MFGKGGMGNLMKQAQQMQEKMQR).

It belongs to the YbaB/EbfC family. As to quaternary structure, homodimer.

The protein localises to the cytoplasm. It is found in the nucleoid. Functionally, binds to DNA and alters its conformation. May be involved in regulation of gene expression, nucleoid organization and DNA protection. The polypeptide is Nucleoid-associated protein SG0690 (Sodalis glossinidius (strain morsitans)).